A 121-amino-acid polypeptide reads, in one-letter code: UPF0102 protein HRM2_30940 (121 aa).

The protein belongs to the UPF0102 family.

This Desulforapulum autotrophicum (strain ATCC 43914 / DSM 3382 / VKM B-1955 / HRM2) (Desulfobacterium autotrophicum) protein is UPF0102 protein HRM2_30940.